A 179-amino-acid chain; its full sequence is Disulfide bond formation protein B (179 aa).

Residues 1-14 (MLSYFKELSLRRPA) are Cytoplasmic-facing. A helical transmembrane segment spans residues 15–31 (WLLLATLACTLEVTGLY). Residues 32 to 49 (FQHKLGLIPCVMCIYERV) lie on the Periplasmic side of the membrane. Cys-41 and Cys-44 are joined by a disulfide. The chain crosses the membrane as a helical span at residues 50-65 (ALTGLLIAGLIALIAP). Residues 66–72 (NFFLFRW) are Cytoplasmic-facing. Residues 73–90 (LALVLWGFSAFKGLSLSI) traverse the membrane as a helical segment. Topologically, residues 91–146 (KHYDYQANPSPWNQCEFKPQFPQTIPLDEWFPNIFAAGTVNCSEKQWQMLGWGMPE) are periplasmic. An intrachain disulfide couples Cys-105 to Cys-132. The chain crosses the membrane as a helical span at residues 147–165 (WLIVAFSLFMLFFLIVFMS). The Cytoplasmic portion of the chain corresponds to 166-179 (QFKRAKPQYRSVFR).

Belongs to the DsbB family.

It is found in the cell inner membrane. In terms of biological role, required for disulfide bond formation in some periplasmic proteins. Acts by oxidizing the DsbA protein. The protein is Disulfide bond formation protein B of Haemophilus ducreyi (strain 35000HP / ATCC 700724).